Here is a 196-residue protein sequence, read N- to C-terminus: ATP-dependent Clp protease proteolytic subunit (196 aa).

The active-site Nucleophile is Ser-101. His-126 is an active-site residue.

Belongs to the peptidase S14 family. In terms of assembly, component of the chloroplastic Clp protease core complex.

It is found in the plastid. The protein localises to the chloroplast stroma. It carries out the reaction Hydrolysis of proteins to small peptides in the presence of ATP and magnesium. alpha-casein is the usual test substrate. In the absence of ATP, only oligopeptides shorter than five residues are hydrolyzed (such as succinyl-Leu-Tyr-|-NHMec, and Leu-Tyr-Leu-|-Tyr-Trp, in which cleavage of the -Tyr-|-Leu- and -Tyr-|-Trp bonds also occurs).. In terms of biological role, cleaves peptides in various proteins in a process that requires ATP hydrolysis. Has a chymotrypsin-like activity. Plays a major role in the degradation of misfolded proteins. In Pleurastrum terricola (Filamentous green alga), this protein is ATP-dependent Clp protease proteolytic subunit.